We begin with the raw amino-acid sequence, 277 residues long: Ribosomal RNA small subunit methyltransferase G (277 aa).

S-adenosyl-L-methionine is bound by residues Gly-128, Phe-133, 188 to 189 (SE), and Arg-198.

It belongs to the methyltransferase superfamily. RNA methyltransferase RsmG family.

It localises to the cytoplasm. It carries out the reaction guanosine(527) in 16S rRNA + S-adenosyl-L-methionine = N(7)-methylguanosine(527) in 16S rRNA + S-adenosyl-L-homocysteine. Functionally, specifically methylates the N7 position of guanine in position 527 of 16S rRNA. The chain is Ribosomal RNA small subunit methyltransferase G from Nitrobacter winogradskyi (strain ATCC 25391 / DSM 10237 / CIP 104748 / NCIMB 11846 / Nb-255).